The following is a 97-amino-acid chain: YcgL domain-containing protein Pfl01_1389 (97 aa).

The 85-residue stretch at Arg-3–Pro-87 folds into the YcgL domain.

This is YcgL domain-containing protein Pfl01_1389 from Pseudomonas fluorescens (strain Pf0-1).